The primary structure comprises 363 residues: GTPase Obg (363 aa).

The 159-residue stretch at 1-159 folds into the Obg domain; it reads MKFIDEAKIY…LELRLELRVL (159 aa). An OBG-type G domain is found at 160–338; the sequence is ADVGLLGLPN…LIYAISEALE (179 aa). GTP-binding positions include 166–173, 191–195, 213–216, 284–287, and 319–321; these read GLPNAGKS, FTTLH, DVPG, NKLD, and AAI. Residues S173 and T193 each coordinate Mg(2+). The disordered stretch occupies residues 342-363; the sequence is RPEIGDLDDNDEDSDEIIRDTE. A compositionally biased stretch (acidic residues) spans 346-356; sequence GDLDDNDEDSD.

Belongs to the TRAFAC class OBG-HflX-like GTPase superfamily. OBG GTPase family. As to quaternary structure, monomer. Requires Mg(2+) as cofactor.

Its subcellular location is the cytoplasm. Its function is as follows. An essential GTPase which binds GTP, GDP and possibly (p)ppGpp with moderate affinity, with high nucleotide exchange rates and a fairly low GTP hydrolysis rate. Plays a role in control of the cell cycle, stress response, ribosome biogenesis and in those bacteria that undergo differentiation, in morphogenesis control. This is GTPase Obg from Dechloromonas aromatica (strain RCB).